A 261-amino-acid polypeptide reads, in one-letter code: Protein TfpB (261 aa).

The protein is Protein TfpB (tfpB) of Moraxella bovis.